We begin with the raw amino-acid sequence, 471 residues long: Glutamyl-tRNA(Gln) amidotransferase subunit A, mitochondrial (471 aa).

Residues lysine 64 and serine 141 each act as charge relay system in the active site. The active-site Acyl-ester intermediate is the serine 165.

The protein belongs to the amidase family. GatA subfamily. As to quaternary structure, subunit of the heterotrimeric GatCAB amidotransferase (AdT) complex, composed of A, B and C subunits.

The protein localises to the mitochondrion. The enzyme catalyses L-glutamyl-tRNA(Gln) + L-glutamine + ATP + H2O = L-glutaminyl-tRNA(Gln) + L-glutamate + ADP + phosphate + H(+). Allows the formation of correctly charged Gln-tRNA(Gln) through the transamidation of misacylated Glu-tRNA(Gln) in the mitochondria. The reaction takes place in the presence of glutamine and ATP through an activated gamma-phospho-Glu-tRNA(Gln). This is Glutamyl-tRNA(Gln) amidotransferase subunit A, mitochondrial from Schizosaccharomyces pombe (strain 972 / ATCC 24843) (Fission yeast).